We begin with the raw amino-acid sequence, 243 residues long: tRNA pseudouridine synthase A (243 aa).

Residue D54 is the Nucleophile of the active site. Residue Y112 coordinates substrate.

Belongs to the tRNA pseudouridine synthase TruA family. Homodimer.

It catalyses the reaction uridine(38/39/40) in tRNA = pseudouridine(38/39/40) in tRNA. Formation of pseudouridine at positions 38, 39 and 40 in the anticodon stem and loop of transfer RNAs. In Onion yellows phytoplasma (strain OY-M), this protein is tRNA pseudouridine synthase A.